Consider the following 290-residue polypeptide: Putative heme oxygenase 3 (290 aa).

A compositionally biased stretch (acidic residues) spans 1-12; the sequence is MSSEVETAEAVD. Residues 1–33 form a disordered region; sequence MSSEVETAEAVDESEKNSMASEKENHSKIADFS. Residues 13-33 show a composition bias toward basic and acidic residues; it reads ESEKNSMASEKENHSKIADFS. 2 HRM repeats span residues 238–243 and 255–260; these read KCPFNA and NCPFQM.

It belongs to the heme oxygenase family. Found in the spleen, liver, thymus, prostate, heart, kidney, brain and testis.

The catalysed reaction is heme b + 3 reduced [NADPH--hemoprotein reductase] + 3 O2 = biliverdin IXalpha + CO + Fe(2+) + 3 oxidized [NADPH--hemoprotein reductase] + 3 H2O + H(+). Its function is as follows. Heme oxygenase cleaves the heme ring at the alpha methene bridge to form biliverdin. Biliverdin is subsequently converted to bilirubin by biliverdin reductase. Heme oxygenase 3 could be implicated in some heme-dependent regulatory role in the cell. The protein is Putative heme oxygenase 3 (Hmox3) of Rattus norvegicus (Rat).